Consider the following 1198-residue polypeptide: Regulator of G-protein signaling 3 (1198 aa).

Residues 137 to 256 (GAGQLRLSID…TPDKEISGWY (120 aa)) enclose the C2 domain. The region spanning 299-376 (KITIPRGKDG…EIILLVWRMV (78 aa)) is the PDZ domain. Omega-N-methylarginine is present on Arg448. Residues 669-933 (QQLAASPPDS…GAEGGLSLRV (265 aa)) are disordered. Phosphoserine is present on Ser674. Over residues 679-697 (KMFETEADEKREMALEEGK) the composition is skewed to basic and acidic residues. Residues 739-751 (EPLSSKDSATSEG) are compositionally biased toward polar residues. The segment covering 753–773 (PPGPDAPPSKDVPPCQEPPPA) has biased composition (pro residues). Residues 877 to 906 (GDEEDAEEAEEVEEGEEGEEDEDEDTSDDN) are compositionally biased toward acidic residues. Residues 907 to 917 (YGERSEAKRSS) show a composition bias toward basic and acidic residues. Phosphoserine is present on residues Ser943, Ser946, Ser978, and Ser1007. Disordered stretches follow at residues 1007-1026 (SGAD…KSKN) and 1032-1056 (KNKL…ADKM). Positions 1073 to 1198 (SLEKLLVHKY…INQKKMSPPL (126 aa)) constitute an RGS domain.

As to quaternary structure, binds EFNB1 and EFNB2. Binds the GNB1-GNG2 heterodimer. Post-translationally, phosphorylated by cyclic GMP-dependent protein kinase. In terms of processing, ISGylated.

The protein localises to the cytoplasm. It localises to the nucleus. Its subcellular location is the cell membrane. Functionally, down-regulates signaling from heterotrimeric G-proteins by increasing the GTPase activity of the alpha subunits, thereby driving them into their inactive GDP-bound form. Down-regulates G-protein-mediated release of inositol phosphates and activation of MAP kinases. This is Regulator of G-protein signaling 3 (RGS3) from Homo sapiens (Human).